Consider the following 253-residue polypeptide: Indole-3-glycerol phosphate synthase (253 aa).

This sequence belongs to the TrpC family.

The enzyme catalyses 1-(2-carboxyphenylamino)-1-deoxy-D-ribulose 5-phosphate + H(+) = (1S,2R)-1-C-(indol-3-yl)glycerol 3-phosphate + CO2 + H2O. It participates in amino-acid biosynthesis; L-tryptophan biosynthesis; L-tryptophan from chorismate: step 4/5. The chain is Indole-3-glycerol phosphate synthase from Exiguobacterium sp. (strain ATCC BAA-1283 / AT1b).